A 269-amino-acid polypeptide reads, in one-letter code: Surfeit locus protein 4 (269 aa).

The next 5 membrane-spanning stretches (helical) occupy residues 64-84 (FLATCFVIINLIGQIGGCVLV), 92-112 (YACFGLFCIIALQTVAYSILW), 179-199 (FFSILQNMVGTALIILVAVGF), 203-223 (LAALTLVVWLLAINVYFNAFW), and 242-262 (TTSVIGGLLLVVALGPGGVSM). Residues 266-269 (KKEW) carry the Di-lysine motif motif.

This sequence belongs to the SURF4 family.

Its subcellular location is the endoplasmic reticulum membrane. The protein localises to the endoplasmic reticulum-Golgi intermediate compartment membrane. It localises to the golgi apparatus membrane. Functionally, endoplasmic reticulum cargo receptor that mediates the export of lipoproteins by recruiting cargos into COPII vesicles to facilitate their secretion. In Danio rerio (Zebrafish), this protein is Surfeit locus protein 4.